The primary structure comprises 289 residues: ATP synthase gamma chain (289 aa).

This sequence belongs to the ATPase gamma chain family. In terms of assembly, F-type ATPases have 2 components, CF(1) - the catalytic core - and CF(0) - the membrane proton channel. CF(1) has five subunits: alpha(3), beta(3), gamma(1), delta(1), epsilon(1). CF(0) has three main subunits: a, b and c.

The protein localises to the cell inner membrane. Its function is as follows. Produces ATP from ADP in the presence of a proton gradient across the membrane. The gamma chain is believed to be important in regulating ATPase activity and the flow of protons through the CF(0) complex. This is ATP synthase gamma chain from Anaeromyxobacter dehalogenans (strain 2CP-C).